A 1076-amino-acid polypeptide reads, in one-letter code: Nucleoporin NUP1 (1076 aa).

The span at 1 to 11 shows a compositional bias: low complexity; the sequence is MSSNTSSVMSS. The segment at 1–39 is disordered; sequence MSSNTSSVMSSPRVEKRSFSSTLKSFFTNPNKKRPSSKK. Position 2 is an N-acetylserine (Ser2). The span at 19–30 shows a compositional bias: polar residues; that stretch reads FSSTLKSFFTNP. A phosphoserine mark is found at Ser54 and Ser161. Disordered stretches follow at residues 143–183 and 224–260; these read SQSK…TNVG and KKDNKDKEGNAGGDQKTSENRNNIKSSISNGNLATGP. 2 stretches are compositionally biased toward polar residues: residues 154–170 and 243–260; these read LCTSSTPSPIKNGSCTR and NRNNIKSSISNGNLATGP. One copy of the FXF 1 repeat lies at 336–338; that stretch reads FDF. Thr381 is modified (phosphothreonine). Phosphoserine is present on Ser383. The FXF 2 repeat unit spans residues 384–386; that stretch reads FNF. The segment at 403–518 is disordered; it reads TTLFNFGGKS…SFVFGASDKQ (116 aa). FXFG repeat units follow at residues 406 to 409 and 422 to 425; these read FNFG and FKFG. Positions 426 to 439 are enriched in basic and acidic residues; sequence KTSEKSENHTESDA. 2 FXFG repeats span residues 448 to 451 and 484 to 487; these read FSFG and FDFG. The segment covering 488-505 has biased composition (basic and acidic residues); sequence KTGDQKETKKGESEKDAS. FXFG repeat units lie at residues 510 to 513, 525 to 528, 543 to 546, and 571 to 574; these read FVFG and FTFG. The interval 548–743 is disordered; that stretch reads AATAKETHTK…SMKSTASTAA (196 aa). FXF repeat units follow at residues 591-593, 614-616, 636-638, and 657-659; these read FSF and FTF. 2 stretches are compositionally biased toward polar residues: residues 634–649 and 658–667; these read PTFSFTEPAQKDSSVV and TFASSKTSQP. Residue Ser637 is modified to Phosphoserine. The stretch at 671 to 674 is one FXFG 9 repeat; it reads FSFG. The FXF 7 repeat unit spans residues 689–691; sequence FSF. FXFG repeat units follow at residues 708 to 711 and 727 to 730; these read FTFG and FSFG. Low complexity predominate over residues 708–723; the sequence is FTFGGSTTNNTTTTST. An FXF 8 repeat occupies 753–755; sequence FSF. One copy of the FXFG 12 repeat lies at 800-803; sequence FSFG. FXF repeat units lie at residues 819–821 and 866–868; these read FSF and FGF. The stretch at 885-888 is one FXFG 13 repeat; the sequence is FNFG. One copy of the FXF 11 repeat lies at 929 to 931; sequence FNF. Residues 940–979 are disordered; that stretch reads GGSVFNMNGNTNANTVFAGSNNQPHQSQTPSFNTNSSFTP. Polar residues predominate over residues 944–964; sequence FNMNGNTNANTVFAGSNNQPH. Residues 965-979 show a composition bias toward low complexity; the sequence is QSQTPSFNTNSSFTP. FG repeat units follow at residues 1008-1009, 1027-1028, and 1038-1039; these read FG. The tract at residues 1025–1054 is disordered; it reads SIFGGAGGVPTTSFGQPQSAPNQMGMGTNN. A compositionally biased stretch (polar residues) spans 1034–1045; it reads PTTSFGQPQSAP. An interaction with KAP95 region spans residues 1040–1076; that stretch reads QPQSAPNQMGMGTNNGMSMGGGVMANRKIARMRHSKR.

Component of the nuclear pore complex (NPC). NPC constitutes the exclusive means of nucleocytoplasmic transport. NPCs allow the passive diffusion of ions and small molecules and the active, nuclear transport receptor-mediated bidirectional transport of macromolecules such as proteins, RNAs, ribonucleoparticles (RNPs), and ribosomal subunits across the nuclear envelope. Due to its 8-fold rotational symmetry, all subunits are present with 8 copies or multiples thereof. Interacts through its FG repeats with nuclear transport receptors. Binds to the nuclear basket of the NPC through NUP60. Interacts with KAP122. Post-translationally, phosphorylated by CDC28.

The protein localises to the nucleus. Its subcellular location is the nuclear pore complex. The protein resides in the nucleus membrane. Functions as a component of the nuclear pore complex (NPC). NPC components, collectively referred to as nucleoporins (NUPs), can play the role of both NPC structural components and of docking or interaction partners for transiently associated nuclear transport factors. Active directional transport is assured by both, a Phe-Gly (FG) repeat affinity gradient for these transport factors across the NPC and a transport cofactor concentration gradient across the nuclear envelope (GSP1 and GSP2 GTPases associated predominantly with GTP in the nucleus, with GDP in the cytoplasm). As one of the FG repeat nucleoporins NUP1 is involved in interactions with and guidance of nuclear transport receptors such as SRP1-KAP95 (importin alpha and beta) through the NPC. Like the closely related NUP2 it also plays an important role in disassembling and recycling SRP1-KAP95 to the cytoplasm after nuclear import. Upon entry of the heterotrimeric SRP1-KAP95-cargo complex in the nucleus, NUP1 binds through its C-terminus to KAP95, thus accelerating the release of KAP95 and, indirectly, of the nuclear localization signal (NLS)-containing cargo from the SRP1-KAP95-cargo complex. The sequence is that of Nucleoporin NUP1 (NUP1) from Saccharomyces cerevisiae (strain ATCC 204508 / S288c) (Baker's yeast).